We begin with the raw amino-acid sequence, 256 residues long: Undecaprenyl-diphosphatase (256 aa).

Helical transmembrane passes span 1 to 21, 39 to 59, 70 to 90, 97 to 117, 134 to 154, 176 to 196, 205 to 225, and 235 to 255; these read MTILDSIILGAIEGFTEFLPI, NAINKAYEVIIQFSAILAVIF, IDLWMKVFIAFLPLAIIGFIF, LFSLHVVAVMFIVGGVVFLIV, AISLKQSLIIGFAQIFALIPG, AEFSFLLAFPVMGAVTAYDLL, ANLIILGVGFVTSFVVAYLSI, and FTFFFFGVYRIVFGVILLLFF.

The protein belongs to the UppP family.

The protein localises to the cell inner membrane. The enzyme catalyses di-trans,octa-cis-undecaprenyl diphosphate + H2O = di-trans,octa-cis-undecaprenyl phosphate + phosphate + H(+). Catalyzes the dephosphorylation of undecaprenyl diphosphate (UPP). Confers resistance to bacitracin. In Sulfurimonas denitrificans (strain ATCC 33889 / DSM 1251) (Thiomicrospira denitrificans (strain ATCC 33889 / DSM 1251)), this protein is Undecaprenyl-diphosphatase.